A 201-amino-acid polypeptide reads, in one-letter code: UPF0301 protein Smed_0532 (201 aa).

The protein belongs to the UPF0301 (AlgH) family.

The chain is UPF0301 protein Smed_0532 from Sinorhizobium medicae (strain WSM419) (Ensifer medicae).